The following is a 271-amino-acid chain: 5-deoxy-glucuronate isomerase (271 aa).

Belongs to the isomerase IolB family.

The enzyme catalyses 5-deoxy-D-glucuronate = 5-dehydro-2-deoxy-D-gluconate. It functions in the pathway polyol metabolism; myo-inositol degradation into acetyl-CoA; acetyl-CoA from myo-inositol: step 4/7. Involved in the isomerization of 5-deoxy-glucuronate (5DG) to 5-dehydro-2-deoxy-D-gluconate (DKG or 2-deoxy-5-keto-D-gluconate). The protein is 5-deoxy-glucuronate isomerase of Lacticaseibacillus casei (Lactobacillus casei).